Reading from the N-terminus, the 142-residue chain is Large ribosomal subunit protein uL11 (142 aa).

The protein belongs to the universal ribosomal protein uL11 family. As to quaternary structure, part of the ribosomal stalk of the 50S ribosomal subunit. Interacts with L10 and the large rRNA to form the base of the stalk. L10 forms an elongated spine to which L12 dimers bind in a sequential fashion forming a multimeric L10(L12)X complex. In terms of processing, one or more lysine residues are methylated.

Forms part of the ribosomal stalk which helps the ribosome interact with GTP-bound translation factors. The protein is Large ribosomal subunit protein uL11 of Rhodopseudomonas palustris (strain BisB5).